Reading from the N-terminus, the 60-residue chain is Large ribosomal subunit protein uL30 (60 aa).

It belongs to the universal ribosomal protein uL30 family. In terms of assembly, part of the 50S ribosomal subunit.

The chain is Large ribosomal subunit protein uL30 from Dehalococcoides mccartyi (strain ATCC BAA-2266 / KCTC 15142 / 195) (Dehalococcoides ethenogenes (strain 195)).